We begin with the raw amino-acid sequence, 82 residues long: MGILSWIIFGLIAGILAKWIMPGKDGGGFFMTILLGIVGAVVGGWISTLFGFGKVDGFNFGSFVVAVIGAIVVLFIYRKIKS.

2 helical membrane-spanning segments follow: residues 26–46 and 57–77; these read GGGFFMTILLGIVGAVVGGWI and GFNFGSFVVAVIGAIVVLFIY.

It belongs to the UPF0410 family.

Its subcellular location is the cell inner membrane. The sequence is that of UPF0410 protein YeaQ (yeaQ) from Escherichia coli O157:H7.